The sequence spans 376 residues: Proton extrusion protein PxcA (376 aa).

4 helical membrane-spanning segments follow: residues 150–170, 251–271, 299–319, and 334–354; these read TLIS…VQQM, AVKN…VCII, IILF…QVLL, and FILL…KYWI.

This sequence belongs to the CemA family.

The protein localises to the cell inner membrane. Functionally, required for H(+) efflux immediately after light irradiation to form a rapid H(+) concentration gradient across the thylakoid membranes. Together with PxcL, contributes to transient H(+) uptake following dark to light transition. This is Proton extrusion protein PxcA from Prochlorococcus marinus (strain MIT 9303).